The chain runs to 82 residues: RNA-binding protein Hfq (82 aa).

A Sm domain is found at 11 to 72; the sequence is DTFLNAVRKS…ISTIAPSAPV (62 aa).

This sequence belongs to the Hfq family. As to quaternary structure, homohexamer.

Its function is as follows. RNA chaperone that binds small regulatory RNA (sRNAs) and mRNAs to facilitate mRNA translational regulation in response to envelope stress, environmental stress and changes in metabolite concentrations. Also binds with high specificity to tRNAs. This Hyphomonas neptunium (strain ATCC 15444) protein is RNA-binding protein Hfq.